A 239-amino-acid chain; its full sequence is Orotidine 5'-phosphate decarboxylase (239 aa).

Residues aspartate 15, lysine 37, 64–73 (DLKFHDIPNT), threonine 126, arginine 187, glutamine 196, glycine 216, and arginine 217 each bind substrate. Lysine 66 acts as the Proton donor in catalysis.

Belongs to the OMP decarboxylase family. Type 1 subfamily. Homodimer.

It catalyses the reaction orotidine 5'-phosphate + H(+) = UMP + CO2. Its pathway is pyrimidine metabolism; UMP biosynthesis via de novo pathway; UMP from orotate: step 2/2. Functionally, catalyzes the decarboxylation of orotidine 5'-monophosphate (OMP) to uridine 5'-monophosphate (UMP). This chain is Orotidine 5'-phosphate decarboxylase, found in Geobacter sulfurreducens (strain ATCC 51573 / DSM 12127 / PCA).